A 1155-amino-acid chain; its full sequence is Eukaryotic translation initiation factor 3 subunit A (1155 aa).

The PCI domain maps to 319 to 502 (LQRMAAHVLL…NSIYFGTDLT (184 aa)). Disordered regions lie at residues 589–613 (QNNA…LAEQ) and 836–1155 (AAEA…VKRR). Basic and acidic residues-rich tracts occupy residues 836 to 900 (AAEA…RGGD), 925 to 987 (DRNE…EPDS), 1004 to 1057 (SRDD…DAAP), and 1066 to 1101 (DAPR…RAPK). Over residues 1104–1118 (GPSGGTGTAASGGGN) the composition is skewed to gly residues. Positions 1125–1145 (PRDEPAPKRDQPQDKENKAVD) are enriched in basic and acidic residues.

It belongs to the eIF-3 subunit A family. In terms of assembly, component of the eukaryotic translation initiation factor 3 (eIF-3) complex. The eIF-3 complex interacts with pix.

The protein resides in the cytoplasm. In terms of biological role, RNA-binding component of the eukaryotic translation initiation factor 3 (eIF-3) complex, which is involved in protein synthesis of a specialized repertoire of mRNAs and, together with other initiation factors, stimulates binding of mRNA and methionyl-tRNAi to the 40S ribosome. The eIF-3 complex specifically targets and initiates translation of a subset of mRNAs involved in cell proliferation. This is Eukaryotic translation initiation factor 3 subunit A from Drosophila pseudoobscura pseudoobscura (Fruit fly).